The chain runs to 344 residues: sn-glycerol-3-phosphate import ATP-binding protein UgpC 2 (344 aa).

In terms of domain architecture, ABC transporter spans 4–234 (IELIDLKKNY…PETVFVAGFI (231 aa)). ATP is bound at residue 36–43 (GPSGCGKS).

This sequence belongs to the ABC transporter superfamily. sn-glycerol-3-phosphate importer (TC 3.A.1.1.3) family. The complex is composed of two ATP-binding proteins (UgpC), two transmembrane proteins (UgpA and UgpE) and a solute-binding protein (UgpB).

The protein localises to the cell inner membrane. It carries out the reaction sn-glycerol 3-phosphate(out) + ATP + H2O = sn-glycerol 3-phosphate(in) + ADP + phosphate + H(+). In terms of biological role, part of the ABC transporter complex UgpBAEC involved in sn-glycerol-3-phosphate (G3P) import. Responsible for energy coupling to the transport system. The chain is sn-glycerol-3-phosphate import ATP-binding protein UgpC 2 from Rhizobium johnstonii (strain DSM 114642 / LMG 32736 / 3841) (Rhizobium leguminosarum bv. viciae).